A 109-amino-acid chain; its full sequence is Cell division protein ZapA (109 aa).

The stretch at 21 to 99 forms a coiled coil; sequence PEQRDALNQA…IEQALLEQGR (79 aa).

The protein belongs to the ZapA family. Type 1 subfamily. As to quaternary structure, homodimer. Interacts with FtsZ.

Its subcellular location is the cytoplasm. Its function is as follows. Activator of cell division through the inhibition of FtsZ GTPase activity, therefore promoting FtsZ assembly into bundles of protofilaments necessary for the formation of the division Z ring. It is recruited early at mid-cell but it is not essential for cell division. The sequence is that of Cell division protein ZapA from Cronobacter sakazakii (strain ATCC BAA-894) (Enterobacter sakazakii).